We begin with the raw amino-acid sequence, 28 residues long: 14-3-3-like protein 4 (28 aa).

Belongs to the 14-3-3 family.

The protein is 14-3-3-like protein 4 of Pseudotsuga menziesii (Douglas-fir).